We begin with the raw amino-acid sequence, 383 residues long: NADH-quinone oxidoreductase subunit D 1 (383 aa).

The protein belongs to the complex I 49 kDa subunit family. NDH-1 is composed of 14 different subunits. Subunits NuoB, C, D, E, F, and G constitute the peripheral sector of the complex.

The protein localises to the cell membrane. It catalyses the reaction a quinone + NADH + 5 H(+)(in) = a quinol + NAD(+) + 4 H(+)(out). NDH-1 shuttles electrons from NADH, via FMN and iron-sulfur (Fe-S) centers, to quinones in the respiratory chain. The immediate electron acceptor for the enzyme in this species is believed to be a menaquinone. Couples the redox reaction to proton translocation (for every two electrons transferred, four hydrogen ions are translocated across the cytoplasmic membrane), and thus conserves the redox energy in a proton gradient. This Streptomyces coelicolor (strain ATCC BAA-471 / A3(2) / M145) protein is NADH-quinone oxidoreductase subunit D 1.